We begin with the raw amino-acid sequence, 414 residues long: Patatin-like protein 1 (414 aa).

One can recognise a PNPLA domain in the interval 20 to 224 (LAIDGGGIRG…AANNPTMVAM (205 aa)). The short motif at 24-29 (GGGIRG) is the GXGXXG element. Positions 62–66 (GTSTG) match the GXSXG motif. Catalysis depends on serine 64, which acts as the Nucleophile. The Proton acceptor role is filled by aspartate 211. The DGA/G motif lies at 211–213 (DGG).

Belongs to the patatin family.

Possesses non-specific lipolytic acyl hydrolase (LAH) activity. Hydrolyzes phospholipids as well as galactolipids. May play a role in disease resistance. In Oryza sativa subsp. indica (Rice), this protein is Patatin-like protein 1 (PLP1).